A 409-amino-acid chain; its full sequence is Multifunctional CCA protein (409 aa).

Residues glycine 8 and arginine 11 each contribute to the ATP site. The CTP site is built by glycine 8 and arginine 11. Mg(2+) is bound by residues aspartate 21 and aspartate 23. ATP contacts are provided by arginine 91, arginine 137, and arginine 140. Positions 91, 137, and 140 each coordinate CTP. The region spanning 228–329 (SGLHTLSVLE…LELLQSFDVY (102 aa)) is the HD domain.

Belongs to the tRNA nucleotidyltransferase/poly(A) polymerase family. Bacterial CCA-adding enzyme type 1 subfamily. As to quaternary structure, monomer. Can also form homodimers and oligomers. The cofactor is Mg(2+). Requires Ni(2+) as cofactor.

The enzyme catalyses a tRNA precursor + 2 CTP + ATP = a tRNA with a 3' CCA end + 3 diphosphate. It catalyses the reaction a tRNA with a 3' CCA end + 2 CTP + ATP = a tRNA with a 3' CCACCA end + 3 diphosphate. Functionally, catalyzes the addition and repair of the essential 3'-terminal CCA sequence in tRNAs without using a nucleic acid template. Adds these three nucleotides in the order of C, C, and A to the tRNA nucleotide-73, using CTP and ATP as substrates and producing inorganic pyrophosphate. tRNA 3'-terminal CCA addition is required both for tRNA processing and repair. Also involved in tRNA surveillance by mediating tandem CCA addition to generate a CCACCA at the 3' terminus of unstable tRNAs. While stable tRNAs receive only 3'-terminal CCA, unstable tRNAs are marked with CCACCA and rapidly degraded. This Pseudomonas fluorescens (strain Pf0-1) protein is Multifunctional CCA protein.